The sequence spans 115 residues: NAD(P)H-quinone oxidoreductase subunit M (115 aa).

Belongs to the complex I NdhM subunit family. As to quaternary structure, NDH-1 can be composed of about 15 different subunits; different subcomplexes with different compositions have been identified which probably have different functions.

Its subcellular location is the cellular thylakoid membrane. The catalysed reaction is a plastoquinone + NADH + (n+1) H(+)(in) = a plastoquinol + NAD(+) + n H(+)(out). It catalyses the reaction a plastoquinone + NADPH + (n+1) H(+)(in) = a plastoquinol + NADP(+) + n H(+)(out). In terms of biological role, NDH-1 shuttles electrons from an unknown electron donor, via FMN and iron-sulfur (Fe-S) centers, to quinones in the respiratory and/or the photosynthetic chain. The immediate electron acceptor for the enzyme in this species is believed to be plastoquinone. Couples the redox reaction to proton translocation, and thus conserves the redox energy in a proton gradient. Cyanobacterial NDH-1 also plays a role in inorganic carbon-concentration. The sequence is that of NAD(P)H-quinone oxidoreductase subunit M from Prochlorococcus marinus (strain MIT 9301).